The chain runs to 820 residues: Breast cancer anti-estrogen resistance protein 3 homolog (820 aa).

Ala2 is subject to N-acetylalanine. 5 positions are modified to phosphoserine: Ser32, Ser72, Ser77, Ser176, and Ser284. The segment at 40–81 (DAYQDVSIHGTLPRKKKGPPSIRSCDNAGHSKSPRQSSPLTQ) is disordered. In terms of domain architecture, SH2 spans 148–247 (WYHGRIPRQV…QSGAIIFQPI (100 aa)). An N6-methyllysine modification is found at Lys329. A disordered region spans residues 346-367 (QSPSMDTSPCPSSPVFRTGSEP). 3 positions are modified to phosphoserine: Ser353, Ser358, and Ser370. The residue at position 437 (Arg437) is an Omega-N-methylarginine. Ser466 carries the phosphoserine modification. One can recognise a Ras-GEF domain in the interval 543–813 (DARVIAQHML…TALSRKLEPP (271 aa)). A mediates the interaction with BCAR1/p130CAS region spans residues 739–743 (LATAR).

In terms of assembly, part of a complex comprised of PTPRA, BCAR1, BCAR3 (via SH2 domain) and SRC; the formation of the complex is dependent on integrin mediated-tyrosine phosphorylation of PTPRA. Within the complex, interacts (via SH2 domain) with PTPRA (when phosphorylated on 'Tyr-825'). Interacts (via Ras-GEF domain) with BCAR1. Interacts (via Ras-GEF domain) with NEDD9. Interacts with PTK2B/FAK1. Interacts with PTPN1. Interacts (via SH2 domain) with EGFR (when tyrosine-phosphorylated). Phosphorylated on tyrosine residues. As to expression, abundantly expressed in the lung and brain, with lower expression in splenic lymphocytes and liver (at protein level). Expressed in splenic lymphocytes (at protein level). Expressed in the lymph node cortical region, periphery of the splenic white pulp and in alveolar lung fibroblasts. Expressed in epithelial cells in the lens equatorial region and early stage nucleated cortical lens fiber cells. Expressed in the thymus. Expressed in B-cells.

The protein localises to the cytoplasm. It localises to the cell junction. The protein resides in the focal adhesion. In terms of biological role, acts as an adapter protein downstream of several growth factor receptors to promote cell proliferation, migration, and redistribution of actin fibers. Specifically involved in INS/insulin signaling pathway by mediating MAPK1/ERK2-MAPK3/ERK1 activation and DNA synthesis. Promotes insulin-mediated membrane ruffling. In response to vasoconstrictor peptide EDN1, involved in the activation of RAP1 downstream of PTK2B via interaction with phosphorylated BCAR1. Inhibits cell migration and invasion via regulation of TGFB-mediated matrix digestion, actin filament rearrangement, and inhibition of invadopodia activity. May inhibit TGFB-SMAD signaling, via facilitating BCAR1 and SMAD2 and/or SMAD3 interaction. Regulates EGF-induced DNA synthesis. Required for the maintenance of ocular lens morphology and structural integrity, potentially via regulation of focal adhesion complex signaling. Acts upstream of PTPRA to regulate the localization of BCAR1 and PTPRA to focal adhesions, via regulation of SRC-mediated phosphorylation of PTPRA. Positively regulates integrin-induced tyrosine phosphorylation of BCAR1. Acts as a guanine nucleotide exchange factor (GEF) for small GTPases RALA, RAP1A and RRAS. However, in a contrasting study, lacks GEF activity towards RAP1. The protein is Breast cancer anti-estrogen resistance protein 3 homolog (Bcar3) of Mus musculus (Mouse).